The sequence spans 404 residues: G2/mitotic-specific cyclin-B1 (404 aa).

Belongs to the cyclin family. Cyclin AB subfamily. Interacts with the CDK1 protein kinase to form a serine/threonine kinase holoenzyme complex also known as maturation promoting factor (MPF). The cyclin subunit imparts substrate specificity to the complex.

Essential for the control of the cell cycle at the G2/M (mitosis) transition. The chain is G2/mitotic-specific cyclin-B1 (ccnb1) from Oryzias latipes (Japanese rice fish).